A 219-amino-acid polypeptide reads, in one-letter code: Phosphatidylserine decarboxylase proenzyme (219 aa).

Ser-188 functions as the Schiff-base intermediate with substrate; via pyruvic acid in the catalytic mechanism. Ser-188 bears the Pyruvic acid (Ser); by autocatalysis mark.

It belongs to the phosphatidylserine decarboxylase family. PSD-A subfamily. As to quaternary structure, heterodimer of a large membrane-associated beta subunit and a small pyruvoyl-containing alpha subunit. Pyruvate is required as a cofactor. Is synthesized initially as an inactive proenzyme. Formation of the active enzyme involves a self-maturation process in which the active site pyruvoyl group is generated from an internal serine residue via an autocatalytic post-translational modification. Two non-identical subunits are generated from the proenzyme in this reaction, and the pyruvate is formed at the N-terminus of the alpha chain, which is derived from the carboxyl end of the proenzyme. The post-translation cleavage follows an unusual pathway, termed non-hydrolytic serinolysis, in which the side chain hydroxyl group of the serine supplies its oxygen atom to form the C-terminus of the beta chain, while the remainder of the serine residue undergoes an oxidative deamination to produce ammonia and the pyruvoyl prosthetic group on the alpha chain.

The protein localises to the cell membrane. It catalyses the reaction a 1,2-diacyl-sn-glycero-3-phospho-L-serine + H(+) = a 1,2-diacyl-sn-glycero-3-phosphoethanolamine + CO2. The protein operates within phospholipid metabolism; phosphatidylethanolamine biosynthesis; phosphatidylethanolamine from CDP-diacylglycerol: step 2/2. In terms of biological role, catalyzes the formation of phosphatidylethanolamine (PtdEtn) from phosphatidylserine (PtdSer). This chain is Phosphatidylserine decarboxylase proenzyme, found in Citrifermentans bemidjiense (strain ATCC BAA-1014 / DSM 16622 / JCM 12645 / Bem) (Geobacter bemidjiensis).